The primary structure comprises 102 residues: Small ribosomal subunit protein uS10 (102 aa).

The protein belongs to the universal ribosomal protein uS10 family. Part of the 30S ribosomal subunit.

Its function is as follows. Involved in the binding of tRNA to the ribosomes. In Acidothermus cellulolyticus (strain ATCC 43068 / DSM 8971 / 11B), this protein is Small ribosomal subunit protein uS10.